Reading from the N-terminus, the 405-residue chain is Putative phosphate permease PYRAB14010 (405 aa).

11 helical membrane-spanning segments follow: residues 3–23 (MDPW…AIGA), 44–64 (AVLI…KTVT), 82–102 (VLVY…VIAT), 114–134 (IIGG…VNWG), 138–158 (SVVL…FFIF), 181–201 (VWIG…VLHG), 207–227 (GVLK…SMIL), 264–284 (VANA…GMAG), 287–307 (VPVP…GVAT), 329–349 (FTID…GMPI), and 384–404 (FVTV…LWIV).

The protein belongs to the inorganic phosphate transporter (PiT) (TC 2.A.20) family.

Its subcellular location is the cell membrane. Potential transporter for phosphate. The polypeptide is Putative phosphate permease PYRAB14010 (Pyrococcus abyssi (strain GE5 / Orsay)).